A 248-amino-acid polypeptide reads, in one-letter code: Probable transcriptional regulatory protein HCH_04926 (248 aa).

Belongs to the TACO1 family.

It localises to the cytoplasm. The protein is Probable transcriptional regulatory protein HCH_04926 of Hahella chejuensis (strain KCTC 2396).